We begin with the raw amino-acid sequence, 23 residues long: Mu-conotoxin-like SxIIIB (23 aa).

Gln-1 carries the pyrrolidone carboxylic acid modification. 3 disulfide bridges follow: Cys-3/Cys-16, Cys-4/Cys-21, and Cys-11/Cys-22. An Alanine amide modification is found at Ala-23.

This sequence belongs to the conotoxin M superfamily. As to expression, expressed by the venom duct.

It is found in the secreted. Its function is as follows. Mu-conotoxins block voltage-gated sodium channels (Nav). The polypeptide is Mu-conotoxin-like SxIIIB (Conus striolatus (Cone snail)).